Consider the following 225-residue polypeptide: RNA-binding protein 24 (225 aa).

An RRM domain is found at 11–88 (TKIFVGGLPY…RKANVNLAYL (78 aa)).

It localises to the nucleus. The protein resides in the cytoplasm. Functionally, multifunctional RNA-binding protein involved in the regulation of pre-mRNA splicing, mRNA stability and mRNA translation important for cell fate decision and differentiation. Plays a major role in pre-mRNA alternative splicing regulation. Mediates preferentially muscle-specific exon inclusion in numerous mRNAs important for striated cardiac and skeletal muscle cell differentiation. Binds to intronic splicing enhancer (ISE) composed of stretches of GU-rich motifs localized in flanking intron of exon that will be included by alternative splicing. Involved in embryonic stem cell (ESC) transition to cardiac cell differentiation by promoting pre-mRNA alternative splicing events of several pluripotency and/or differentiation genes. Plays a role in the regulation of mRNA stability and mRNA translation to which it is bound. Involved in myogenic differentiation by regulating MYOG levels. Binds to a huge amount of mRNAs. Involved in embryonic heart development and myogenic differentiation of somitic muscle progenitors. This chain is RNA-binding protein 24, found in Gallus gallus (Chicken).